A 364-amino-acid chain; its full sequence is Capsular polysaccharide phosphotransferase fcs1 (364 aa).

The protein belongs to the stealth family.

Functionally, part of a group II capsule biosynthesis locus. This Haemophilus influenzae protein is Capsular polysaccharide phosphotransferase fcs1 (fcs1).